Consider the following 352-residue polypeptide: Protein Wnt-3a (352 aa).

The first 18 residues, 1 to 18 (MASFGYFLFLCGLSQALS), serve as a signal peptide directing secretion. Residues cysteine 77 and cysteine 88 are joined by a disulfide bond. Asparagine 87 and asparagine 92 each carry an N-linked (GlcNAc...) asparagine glycan. Cystine bridges form between cysteine 128/cysteine 136, cysteine 138/cysteine 155, cysteine 203/cysteine 217, cysteine 205/cysteine 212, cysteine 281/cysteine 312, cysteine 297/cysteine 307, cysteine 311/cysteine 351, cysteine 327/cysteine 342, cysteine 329/cysteine 339, and cysteine 334/cysteine 335. Serine 209 is lipidated: O-palmitoleoyl serine; by PORCN. A glycan (N-linked (GlcNAc...) asparagine) is linked at asparagine 298.

The protein belongs to the Wnt family. In terms of processing, palmitoleoylation is required for efficient binding to frizzled receptors. Depalmitoleoylation leads to inhibit the Wnt signaling pathway. Disulfide bonds have critical and distinct roles in secretion and activity. Loss of each conserved cysteine in WNT3A results in high molecular weight oxidized Wnt oligomers, which are formed through inter-Wnt disulfide bonding. Expressed in cornea. Isoform 1 is expressed in the primitive streak, dorsal neural tube, proximal otic vesicle, the apical ectodermal ridge and the epithelium of feather buds.

The protein localises to the secreted. It is found in the extracellular space. The protein resides in the extracellular matrix. It localises to the cytoplasm. In terms of biological role, ligand for members of the frizzled family of seven transmembrane receptors. Functions in the canonical Wnt signaling pathway that results in activation of transcription factors of the TCF/LEF family. Regulates chick apical ectodermal ridge formation. Required for normal embryonic mesoderm development and formation of caudal somites. Required for normal morphogenesis of the developing neural tube. The protein is Protein Wnt-3a (WNT3A) of Gallus gallus (Chicken).